The primary structure comprises 318 residues: Ribonuclease Z (318 aa).

7 residues coordinate Zn(2+): H62, H64, D66, H67, H139, D210, and H268. Residue D66 is the Proton acceptor of the active site.

It belongs to the RNase Z family. As to quaternary structure, homodimer. Zn(2+) is required as a cofactor.

It catalyses the reaction Endonucleolytic cleavage of RNA, removing extra 3' nucleotides from tRNA precursor, generating 3' termini of tRNAs. A 3'-hydroxy group is left at the tRNA terminus and a 5'-phosphoryl group is left at the trailer molecule.. Functionally, zinc phosphodiesterase, which displays some tRNA 3'-processing endonuclease activity. Probably involved in tRNA maturation, by removing a 3'-trailer from precursor tRNA. The chain is Ribonuclease Z from Gloeothece citriformis (strain PCC 7424) (Cyanothece sp. (strain PCC 7424)).